The primary structure comprises 664 residues: Intraflagellar transport protein 70B (664 aa).

TPR repeat units follow at residues 11-44 (DGEF…SPRS), 45-78 (RAGL…HPEL), 153-186 (LDGQ…SGYR), 188-220 (DLSY…GIRQ), 385-418 (LTEQ…YEDT), 423-456 (IPVL…CNDH), and 458-491 (VWKL…HYDN). A coiled-coil region spans residues 509-532 (MISQNEEAEELMRKIGKEEEQLSY). A TPR 8 repeat occupies 543–576 (CIVNLVIGTLYCAKGNYDFGISRVIKSLEPCNKK).

Belongs to the TTC30/dfy-1/fleer family. In terms of assembly, interacts with the IFT B complex components IFT27, IFT46, IFT74, IFT52, IFT57, IFT80, IFT81 and IFT88. Interacts with KIF17.

Its subcellular location is the cell projection. It localises to the cilium. Its function is as follows. Required for polyglutamylation of axonemal tubulin. Plays a role in anterograde intraflagellar transport (IFT), the process by which cilia precursors are transported from the base of the cilium to the site of their incorporation at the tip. The chain is Intraflagellar transport protein 70B (IFT70B) from Bos taurus (Bovine).